The sequence spans 545 residues: Propane 2-monooxygenase, hydroxylase component large subunit (545 aa).

Residues Glu97, Glu127, His130, Glu192, Glu226, and His229 each contribute to the Fe cation site.

The protein belongs to the TmoA/XamoA family. The propane 2-monooxygenase multicomponent enzyme system is composed of an electron transfer component and a monooxygenase component interacting with the effector protein PrmD. The electron transfer component is composed of a reductase (PrmB), and the monooxygenase component is formed by a large subunit (PrmA) and a small subunit (PrmC). Probably requires the presence of the chaperonin-like protein PrmG to ensure a productive folding, resulting of a soluble PrmA, which leads to the active form of PrmABCD. Fe(2+) serves as cofactor.

It carries out the reaction propane + NADH + O2 + H(+) = propan-2-ol + NAD(+) + H2O. The enzyme catalyses phenol + NADH + O2 + H(+) = hydroquinone + NAD(+) + H2O. Its function is as follows. Component of the propane 2-monooxygenase multicomponent enzyme system which is involved in the degradation of propane via the O2-dependent hydroxylation of propane. Under acetone induction, also able to catalyze the oxidation of phenol to yield hydroquinone. In Gordonia sp. (strain TY-5), this protein is Propane 2-monooxygenase, hydroxylase component large subunit.